Reading from the N-terminus, the 1062-residue chain is Carbamoyl phosphate synthase large chain (1062 aa).

A carboxyphosphate synthetic domain region spans residues 1–401; that stretch reads MPKRTDIHKI…AMQKAVQSLE (401 aa). ATP-binding residues include Arg129, Arg169, Gly175, Gly176, Lys208, Ile210, Glu215, Gly241, Ile242, His243, Gln284, and Glu298. One can recognise an ATP-grasp 1 domain in the interval 133-327; the sequence is KELCQKLGEP…IAKMAAKIAI (195 aa). Mg(2+)-binding residues include Gln284, Glu298, and Asn300. Positions 284, 298, and 300 each coordinate Mn(2+). Residues 402–546 are oligomerization domain; the sequence is IDEKDLYSAK…YSTYDGENES (145 aa). Residues 547-929 are carbamoyl phosphate synthetic domain; the sequence is RKSGKKSVIV…ALYKAFAGAK (383 aa). The region spanning 671–861 is the ATP-grasp 2 domain; that stretch reads DQIIKSLHLH…MAQVATRVIM (191 aa). Residues Arg707, Asp746, Leu748, Glu752, Gly777, Val778, His779, Ser780, Gln820, and Glu832 each coordinate ATP. Residues Gln820, Glu832, and Asn834 each contribute to the Mg(2+) site. Residues Gln820, Glu832, and Asn834 each contribute to the Mn(2+) site. An MGS-like domain is found at 930 to 1062; the sequence is MQLPENGNVL…NRSFATDALK (133 aa). Residues 930-1062 form an allosteric domain region; sequence MQLPENGNVL…NRSFATDALK (133 aa).

This sequence belongs to the CarB family. As to quaternary structure, composed of two chains; the small (or glutamine) chain promotes the hydrolysis of glutamine to ammonia, which is used by the large (or ammonia) chain to synthesize carbamoyl phosphate. Tetramer of heterodimers (alpha,beta)4. The cofactor is Mg(2+). Mn(2+) is required as a cofactor.

The catalysed reaction is hydrogencarbonate + L-glutamine + 2 ATP + H2O = carbamoyl phosphate + L-glutamate + 2 ADP + phosphate + 2 H(+). It catalyses the reaction hydrogencarbonate + NH4(+) + 2 ATP = carbamoyl phosphate + 2 ADP + phosphate + 2 H(+). Its pathway is amino-acid biosynthesis; L-arginine biosynthesis; carbamoyl phosphate from bicarbonate: step 1/1. It participates in pyrimidine metabolism; UMP biosynthesis via de novo pathway; (S)-dihydroorotate from bicarbonate: step 1/3. Its function is as follows. Large subunit of the glutamine-dependent carbamoyl phosphate synthetase (CPSase). CPSase catalyzes the formation of carbamoyl phosphate from the ammonia moiety of glutamine, carbonate, and phosphate donated by ATP, constituting the first step of 2 biosynthetic pathways, one leading to arginine and/or urea and the other to pyrimidine nucleotides. The large subunit (synthetase) binds the substrates ammonia (free or transferred from glutamine from the small subunit), hydrogencarbonate and ATP and carries out an ATP-coupled ligase reaction, activating hydrogencarbonate by forming carboxy phosphate which reacts with ammonia to form carbamoyl phosphate. The polypeptide is Carbamoyl phosphate synthase large chain (Lactobacillus delbrueckii subsp. bulgaricus (strain ATCC BAA-365 / Lb-18)).